Consider the following 880-residue polypeptide: Translation initiation factor IF-2 (880 aa).

The tract at residues 259–281 is disordered; sequence KNREEARAVGRSSKSQSKRKSST. Positions 379 to 548 constitute a tr-type G domain; it reads SRAPVVTIMG…LLQAEVLELK (170 aa). A G1 region spans residues 388–395; sequence GHVDHGKT. 388 to 395 contacts GTP; the sequence is GHVDHGKT. The G2 stretch occupies residues 413–417; the sequence is GITQH. Residues 434 to 437 form a G3 region; the sequence is DTPG. GTP is bound by residues 434-438 and 488-491; these read DTPGH and NKID. Residues 488 to 491 are G4; sequence NKID. Positions 524–526 are G5; that stretch reads SAK.

Belongs to the TRAFAC class translation factor GTPase superfamily. Classic translation factor GTPase family. IF-2 subfamily.

The protein localises to the cytoplasm. In terms of biological role, one of the essential components for the initiation of protein synthesis. Protects formylmethionyl-tRNA from spontaneous hydrolysis and promotes its binding to the 30S ribosomal subunits. Also involved in the hydrolysis of GTP during the formation of the 70S ribosomal complex. This chain is Translation initiation factor IF-2, found in Baumannia cicadellinicola subsp. Homalodisca coagulata.